The sequence spans 428 residues: Dihydroorotase (428 aa).

Residues histidine 59 and histidine 61 each contribute to the Zn(2+) site. Residues 61 to 63 and asparagine 93 each bind substrate; that span reads HLR. Zn(2+)-binding residues include aspartate 151, histidine 178, and histidine 231. A substrate-binding site is contributed by asparagine 277. Aspartate 304 provides a ligand contact to Zn(2+). Residue aspartate 304 is part of the active site. Substrate-binding positions include histidine 308 and 322–323; that span reads FG.

Belongs to the metallo-dependent hydrolases superfamily. DHOase family. Class I DHOase subfamily. The cofactor is Zn(2+).

It catalyses the reaction (S)-dihydroorotate + H2O = N-carbamoyl-L-aspartate + H(+). It participates in pyrimidine metabolism; UMP biosynthesis via de novo pathway; (S)-dihydroorotate from bicarbonate: step 3/3. Its function is as follows. Catalyzes the reversible cyclization of carbamoyl aspartate to dihydroorotate. The polypeptide is Dihydroorotase (Bacillus pumilus (strain SAFR-032)).